The primary structure comprises 218 residues: Protein N-lysine methyltransferase METTL21A (218 aa).

S-adenosyl-L-methionine-binding positions include tryptophan 47, 73-75 (GAG), aspartate 94, tryptophan 125, and alanine 143.

The protein belongs to the methyltransferase superfamily. METTL21 family. In terms of assembly, interacts with heat shock 70 family members; at least some of these proteins are methylation substrates.

It localises to the cytoplasm. The catalysed reaction is L-lysyl-[protein] + 3 S-adenosyl-L-methionine = N(6),N(6),N(6)-trimethyl-L-lysyl-[protein] + 3 S-adenosyl-L-homocysteine + 3 H(+). Protein-lysine methyltransferase that selectively trimethylates residues in heat shock protein 70 (HSP70) family members. Contributes to the in vivo trimethylation of Lys residues in HSPA1 and HSPA8. In vitro methylates 'Lys-561' in HSPA1, 'Lys-564' in HSPA2, 'Lys-585' in HSPA5, 'Lys-563' in HSPA6 and 'Lys-561' in HSPA8. This is Protein N-lysine methyltransferase METTL21A (METTL21A) from Bos taurus (Bovine).